Reading from the N-terminus, the 121-residue chain is uncharacterized protein (121 aa).

A helical transmembrane segment spans residues 6–26 (ITTASILLVVIVAFCAAAPMI).

It localises to the membrane. This is an uncharacterized protein from Caenorhabditis elegans.